A 211-amino-acid chain; its full sequence is 3-demethoxyubiquinol 3-hydroxylase (211 aa).

Glutamate 60, glutamate 90, histidine 93, glutamate 142, glutamate 174, and histidine 177 together coordinate Fe cation.

The protein belongs to the COQ7 family. It depends on Fe cation as a cofactor.

The protein resides in the cell membrane. It carries out the reaction a 5-methoxy-2-methyl-3-(all-trans-polyprenyl)benzene-1,4-diol + AH2 + O2 = a 3-demethylubiquinol + A + H2O. Its pathway is cofactor biosynthesis; ubiquinone biosynthesis. Its function is as follows. Catalyzes the hydroxylation of 2-nonaprenyl-3-methyl-6-methoxy-1,4-benzoquinol during ubiquinone biosynthesis. The sequence is that of 3-demethoxyubiquinol 3-hydroxylase from Herminiimonas arsenicoxydans.